The sequence spans 225 residues: Heptaprenylglyceryl phosphate synthase (225 aa).

A sn-glycerol 1-phosphate-binding site is contributed by Lys6. Mg(2+) is bound by residues Asp8 and Thr34. Residues 153–158, Gly183, and 203–204 each bind sn-glycerol 1-phosphate; these read YVEYSG and GN.

This sequence belongs to the GGGP/HepGP synthase family. Group I subfamily. Homodimer. Mg(2+) serves as cofactor.

The catalysed reaction is sn-glycerol 1-phosphate + all-trans-heptaprenyl diphosphate = 3-heptaprenyl-sn-glycero-1-phosphate + diphosphate. The protein operates within membrane lipid metabolism; glycerophospholipid metabolism. Its function is as follows. Prenyltransferase that catalyzes in vivo the transfer of the heptaprenyl moiety of heptaprenyl pyrophosphate (HepPP; 35 carbon atoms) to the C3 hydroxyl of sn-glycerol-1-phosphate (G1P), producing heptaprenylglyceryl phosphate (HepGP). This reaction is an ether-bond-formation step in the biosynthesis of archaea-type G1P-based membrane lipids found in Bacillales. This Listeria monocytogenes serotype 4a (strain HCC23) protein is Heptaprenylglyceryl phosphate synthase.